The chain runs to 392 residues: Bifunctional enzyme Fae/Hps (392 aa).

The formaldehyde-activating enzyme stretch occupies residues 1–161 (MFQIGEALMG…EESNKSTHAI (161 aa)). Histidine 17 functions as the Proton donor in the catalytic mechanism. Substrate-binding residues include aspartate 19, leucine 48, lysine 66, threonine 68, and glutamine 83. The 3-hexulose-6-phosphate synthase stretch occupies residues 162-392 (MGFKVTRLWD…IDQFRVMTDF (231 aa)).

It in the N-terminal section; belongs to the formaldehyde-activating enzyme family. This sequence in the C-terminal section; belongs to the HPS/KGPDC family. HPS subfamily.

It carries out the reaction 5,6,7,8-tetrahydromethanopterin + formaldehyde = 5,10-methylenetetrahydromethanopterin + H2O. The catalysed reaction is D-ribulose 5-phosphate + formaldehyde = D-arabino-hex-3-ulose 6-phosphate. The protein operates within carbohydrate biosynthesis; D-ribose 5-phosphate biosynthesis. Its function is as follows. Catalyzes the condensation of formaldehyde with tetrahydromethanopterin (H(4)MPT) to 5,10-methylenetetrahydromethanopterin. Catalyzes the reversible formation of ribulose-5-phosphate and formaldehyde from 3-hexulose-6-phosphate. This chain is Bifunctional enzyme Fae/Hps, found in Methanosarcina mazei (strain ATCC BAA-159 / DSM 3647 / Goe1 / Go1 / JCM 11833 / OCM 88) (Methanosarcina frisia).